Here is a 754-residue protein sequence, read N- to C-terminus: Protein neuralized (754 aa).

The 155-residue stretch at 106-260 (PLQFHSVHGD…NCTGIEFLDS (155 aa)) folds into the NHR 1 domain. Positions 280–297 (QQQQMPQPAANASSALNS) are enriched in low complexity. Residues 280–308 (QQQQMPQPAANASSALNSHHPHQQSRRSL) form a disordered region. Phosphoserine occurs at positions 338 and 341. One can recognise an NHR 2 domain in the interval 368–523 (PVPFHNTKGR…STQSLRMFRQ (156 aa)). The RING-type zinc finger occupies 701–742 (CTICYENPIDSVLYMCGHMCMCYDCAIEQWRGVGGGQCPLCR).

It localises to the nucleus. Its function is as follows. Involved in neurogenesis. Interacts with other neurogenic proteins in the specification of the neuroblast versus epidermoblast cell fate. In Drosophila melanogaster (Fruit fly), this protein is Protein neuralized (neur).